The chain runs to 256 residues: Hemin import ATP-binding protein HmuV (256 aa).

One can recognise an ABC transporter domain in the interval 2–238 (ISAQNLVYSL…QELTMLYGAD (237 aa)). ATP is bound at residue 34-41 (GPNGAGKS).

The protein belongs to the ABC transporter superfamily. Heme (hemin) importer (TC 3.A.1.14.5) family. The complex is composed of two ATP-binding proteins (HmuV), two transmembrane proteins (HmuU) and a solute-binding protein (HmuT).

Its subcellular location is the cell inner membrane. In terms of biological role, part of the ABC transporter complex HmuTUV involved in hemin import. Responsible for energy coupling to the transport system. The protein is Hemin import ATP-binding protein HmuV of Shigella dysenteriae.